The primary structure comprises 190 residues: Early nodulin-like protein 12 (190 aa).

The N-terminal stretch at 1 to 21 (MGIIVPVLTLVFLLFAKVSHG) is a signal peptide. Residues 26–130 (RVILVGGSVG…GEKITLVVLA (105 aa)) form the Phytocyanin domain. An N-linked (GlcNAc...) asparagine glycan is attached at Asn44. Cysteines 84 and 118 form a disulfide. The interval 135–164 (GGGSSSGDAPKVSPVSPTAQTPAPAPGPAA) is disordered. Low complexity predominate over residues 151–164 (PTAQTPAPAPGPAA). Asn167 carries GPI-anchor amidated asparagine lipidation. Positions 168–190 (AAVGLKVASGWFLTAVVVGLAMA) are cleaved as a propeptide — removed in mature form.

The protein belongs to the early nodulin-like (ENODL) family. Confined to flowers and siliques. Expressed in female gametophytes.

It is found in the cell membrane. In terms of biological role, may act as a carbohydrate transporter. Required, together with ENODL11, ENODL12, ENODL13, ENODL14 and ENODL15, for male-female communication and pollen tube reception and burst at the synergid cell surface of the female gametophyte. This chain is Early nodulin-like protein 12, found in Arabidopsis thaliana (Mouse-ear cress).